The primary structure comprises 174 residues: ATP synthase subunit d, mitochondrial (174 aa).

Position 2 is an N-acetylserine (Ser2).

It belongs to the ATPase d subunit family. As to quaternary structure, F-type ATPases have 2 components, CF(1) - the catalytic core - and CF(0) - the membrane proton channel. In yeast, the dimeric form of ATP synthase consists of 17 polypeptides: alpha, beta, gamma, delta, epsilon, 4 (B), 5 (OSCP), 6 (A), 8, 9 (C), d, E (Tim11), f, g, h, i/j and k.

It localises to the mitochondrion. Its subcellular location is the mitochondrion inner membrane. In terms of biological role, mitochondrial membrane ATP synthase (F(1)F(0) ATP synthase or Complex V) produces ATP from ADP in the presence of a proton gradient across the membrane which is generated by electron transport complexes of the respiratory chain. F-type ATPases consist of two structural domains, F(1) - containing the extramembraneous catalytic core, and F(0) - containing the membrane proton channel, linked together by a central stalk and a peripheral stalk. During catalysis, ATP synthesis in the catalytic domain of F(1) is coupled via a rotary mechanism of the central stalk subunits to proton translocation. Part of the complex F(0) domain and the peripheric stalk, which acts as a stator to hold the catalytic alpha(3)beta(3) subcomplex and subunit a/ATP6 static relative to the rotary elements. This is ATP synthase subunit d, mitochondrial (ATP7) from Saccharomyces cerevisiae (strain ATCC 204508 / S288c) (Baker's yeast).